We begin with the raw amino-acid sequence, 359 residues long: Ribosomal RNA small subunit methyltransferase mra1 (359 aa).

The span at 1 to 10 (MPTYSKRKSR) shows a compositional bias: basic residues. 2 disordered regions span residues 1 to 62 (MPTY…EDEE) and 98 to 118 (VKSD…VKAR). A Phosphoserine modification is found at Ser12. Residues 18–39 (KTNQPKFIKRSQSSETITSGET) show a composition bias toward polar residues. At Thr33 the chain carries Phosphothreonine. Ser100 carries the phosphoserine modification. S-adenosyl-L-methionine contacts are provided by residues Leu287, Gly314, 319-321 (GPD), and 334-339 (ISDYPL).

Belongs to the class IV-like SAM-binding methyltransferase superfamily. RNA methyltransferase NEP1 family. Homodimer.

It is found in the nucleus. The protein localises to the nucleolus. The enzyme catalyses a pseudouridine in rRNA + S-adenosyl-L-methionine = an N(1)-methylpseudouridine in rRNA + S-adenosyl-L-homocysteine + H(+). Functionally, S-adenosyl-L-methionine-dependent pseudouridine N(1)-methyltransferase that methylates the pseudouridine corresponding to position 1189 (Psi1189) in S.cerevisiae 18S rRNA. Involved the biosynthesis of the hypermodified N1-methyl-N3-(3-amino-3-carboxypropyl) pseudouridine (m1acp3-Psi) conserved in eukaryotic 18S rRNA. Also has an essential role in 40S ribosomal subunit biogenesis independent on its methyltransferase activity, facilitating the incorporation of ribosomal protein S19 during the formation of pre-ribosomes. Essential for cell growth. It also has a key role in promoting the mating function. The chain is Ribosomal RNA small subunit methyltransferase mra1 from Schizosaccharomyces pombe (strain 972 / ATCC 24843) (Fission yeast).